Reading from the N-terminus, the 126-residue chain is UPF0538 protein C2orf76 homolog (126 aa).

The protein belongs to the UPF0538 family.

In Pongo abelii (Sumatran orangutan), this protein is UPF0538 protein C2orf76 homolog.